The following is a 734-amino-acid chain: Photosystem I P700 chlorophyll a apoprotein A2 (734 aa).

Transmembrane regions (helical) follow at residues 46-69 (IFAS…FHVA), 135-158 (LYTG…LHLQ), 175-199 (LNHH…HVAI), 273-291 (MAHH…GHMY), 330-353 (LHFQ…QHMY), 369-395 (AALY…IFFI), 417-439 (AIIS…LYVH), and 517-535 (FLVH…LILV). [4Fe-4S] cluster-binding residues include C559 and C568. Transmembrane regions (helical) follow at residues 575-596 (AFYL…YWHW) and 643-665 (LSVW…MFLI). Chlorophyll a contacts are provided by H654, M662, and Y670. W671 lines the phylloquinone pocket. The helical transmembrane segment at 707-727 (LVGLAHFSVGYIFTYAAFLIA) threads the bilayer.

This sequence belongs to the PsaA/PsaB family. As to quaternary structure, the PsaA/B heterodimer binds the P700 chlorophyll special pair and subsequent electron acceptors. PSI consists of a core antenna complex that captures photons, and an electron transfer chain that converts photonic excitation into a charge separation. The eukaryotic PSI reaction center is composed of at least 11 subunits. It depends on P700 is a chlorophyll a/chlorophyll a' dimer, A0 is one or more chlorophyll a, A1 is one or both phylloquinones and FX is a shared 4Fe-4S iron-sulfur center. as a cofactor.

The protein resides in the plastid. It localises to the chloroplast thylakoid membrane. The catalysed reaction is reduced [plastocyanin] + hnu + oxidized [2Fe-2S]-[ferredoxin] = oxidized [plastocyanin] + reduced [2Fe-2S]-[ferredoxin]. Its function is as follows. PsaA and PsaB bind P700, the primary electron donor of photosystem I (PSI), as well as the electron acceptors A0, A1 and FX. PSI is a plastocyanin-ferredoxin oxidoreductase, converting photonic excitation into a charge separation, which transfers an electron from the donor P700 chlorophyll pair to the spectroscopically characterized acceptors A0, A1, FX, FA and FB in turn. Oxidized P700 is reduced on the lumenal side of the thylakoid membrane by plastocyanin. The polypeptide is Photosystem I P700 chlorophyll a apoprotein A2 (Lactuca sativa (Garden lettuce)).